Reading from the N-terminus, the 336-residue chain is UDP-N-acetylmuramoylpentapeptide-lysine N(6)-alanyltransferase (336 aa).

Substrate is bound by residues 37-40 (KNNW), Tyr-104, Arg-212, Tyr-216, and Tyr-257.

Belongs to the FemABX family.

The enzyme catalyses UDP-N-acetyl-alpha-D-muramoyl-L-alanyl-gamma-D-glutamyl-L-lysyl-D-alanyl-D-alanine + L-alanyl-tRNA(Ala) = UDP-N-acetyl-alpha-D-muramoyl-L-alanyl-gamma-D-glutamyl-N(6)-(L-alanyl)-L-lysyl-D-alanyl-D-alanine + tRNA(Ala) + H(+). Functionally, involved in the synthesis of the bacterial cell wall. Catalyzes the addition of alanine into the interchain peptide bridge of peptidoglycan precursor using aminoacyl-tRNA(Ala) as amino acid donor. This alanine is added to the epsilon-amino group of the L-lysine of the peptidoglycan UDP-N-acetyl-alpha-D-muramoyl-L-alanyl-D-glutamyl-L-lysyl-D-alanyl-D-alanine, in a ribosome-independent mechanism. Specific for UDP-N-acetyl-muramoyl-pentapeptide. Has no activity toward UDP-N-acetyl-muramoyl-tetrapeptide or UDP-N-acetyl-muramoyl-tripeptide. Also acts on L-seryl-tRNA(Ser). This Weissella viridescens (Lactobacillus viridescens) protein is UDP-N-acetylmuramoylpentapeptide-lysine N(6)-alanyltransferase.